A 1778-amino-acid polypeptide reads, in one-letter code: Internalin I (1778 aa).

Positions 1-28 (MKKKFSIVIISVLLLGYLAPFDTLLVGA) are cleaved as a signal peptide. Residues 36 to 101 (DTAVKTAEAD…NIKTEINTDK (66 aa)) are disordered. Acidic residues predominate over residues 51–62 (IESETGSDDETA). Over residues 63–88 (EEPKEAKEAEASKETTEKEEKAKTEE) the composition is skewed to basic and acidic residues. LRR repeat units follow at residues 155–179 (AISQ…EGLQ), 183–204 (NLTS…KDLV), 205–227 (NLVS…EDLV), 228–250 (NLQE…ASLP), 251–272 (VLKE…NPAG), 277–298 (ELET…AKLP), 299–321 (KLKN…NGAT), 322–344 (KLQL…SGLS), 345–367 (ELEM…KNLP), 368–389 (NLVN…NNLP), 390–412 (KLQT…TDLP), 413–434 (QLKT…DNLP), 435–456 (KLEK…TDLP), 457–478 (RLSY…KKLP), 479–500 (LLEW…TNFP), 501–522 (SLNY…TELP), 523–544 (SLKE…HDMP), 545–566 (NLRK…DNLP), 567–588 (KLQS…HDLP), 589–610 (SLET…DNLP), 611–632 (DLTY…GDLP), 633–653 (NLET…GTMD), 657–678 (KLRI…GNLS), 685–707 (NLTE…STLS), 708–729 (RLIY…SNLT), 730–751 (NLQE…SDLE), and 752–773 (NLNK…ANMV). The region spanning 785 to 872 (TYTLPTVLSY…SAAKVTADAE (88 aa)) is the LRRCT domain. MucBP domains are found at residues 1510-1569 (DAAA…EQTV), 1575-1634 (AIKP…PQTI), and 1644-1705 (SKKS…SQTV). The interval 1716 to 1742 (SKDDPKVKGKTNQPSSTDTKLKVDNNS) is disordered. Residues 1725–1742 (KTNQPSSTDTKLKVDNNS) are compositionally biased toward polar residues. The short motif at 1743–1747 (LPATG) is the LPXTG sorting signal element. Pentaglycyl murein peptidoglycan amidated threonine is present on T1746. Positions 1747-1778 (GDTENMILAVLIGFNMLIVASIFLFRKPKTNQ) are cleaved as a propeptide — removed by sortase.

Belongs to the internalin family.

Its subcellular location is the secreted. The protein resides in the cell wall. A role in virulence could not be demonstrated. The sequence is that of Internalin I (inlI) from Listeria monocytogenes serovar 1/2a (strain ATCC BAA-679 / EGD-e).